The following is a 450-amino-acid chain: Eukaryotic translation initiation factor 3 subunit E (450 aa).

Residues 255–424 form the PCI domain; it reads TELFFSPAYI…GTVIMNHPPQ (170 aa).

This sequence belongs to the eIF-3 subunit E family. As to quaternary structure, component of the eukaryotic translation initiation factor 3 (eIF-3) complex.

It is found in the cytoplasm. Functionally, component of the eukaryotic translation initiation factor 3 (eIF-3) complex, which is involved in protein synthesis of a specialized repertoire of mRNAs and, together with other initiation factors, stimulates binding of mRNA and methionyl-tRNAi to the 40S ribosome. The eIF-3 complex specifically targets and initiates translation of a subset of mRNAs involved in cell proliferation. The protein is Eukaryotic translation initiation factor 3 subunit E (int6) of Aspergillus clavatus (strain ATCC 1007 / CBS 513.65 / DSM 816 / NCTC 3887 / NRRL 1 / QM 1276 / 107).